We begin with the raw amino-acid sequence, 337 residues long: tRNA N6-adenosine threonylcarbamoyltransferase (337 aa).

Fe cation is bound by residues His-111 and His-115. Substrate contacts are provided by residues 134–138 (LVSGG), Asp-167, Gly-180, and Asn-272. Asp-300 contributes to the Fe cation binding site.

Belongs to the KAE1 / TsaD family. The cofactor is Fe(2+).

Its subcellular location is the cytoplasm. It carries out the reaction L-threonylcarbamoyladenylate + adenosine(37) in tRNA = N(6)-L-threonylcarbamoyladenosine(37) in tRNA + AMP + H(+). Its function is as follows. Required for the formation of a threonylcarbamoyl group on adenosine at position 37 (t(6)A37) in tRNAs that read codons beginning with adenine. Is involved in the transfer of the threonylcarbamoyl moiety of threonylcarbamoyl-AMP (TC-AMP) to the N6 group of A37, together with TsaE and TsaB. TsaD likely plays a direct catalytic role in this reaction. This Escherichia coli O45:K1 (strain S88 / ExPEC) protein is tRNA N6-adenosine threonylcarbamoyltransferase.